A 613-amino-acid chain; its full sequence is Kelch-like protein 36 (613 aa).

A BTB domain is found at 45 to 112 (CDVVLVVEEQ…LYSSELELDG (68 aa)). The BACK domain occupies 147–249 (YLYLQELASI…PEDILLQRVK (103 aa)). Kelch repeat units lie at residues 294–343 (CLLF…VLGG), 344–395 (FIFV…SIED), 396–442 (MLVA…IYKD), 444–491 (VYIS…SLGD), 492–544 (SIYS…VWQG), and 545–593 (RIYI…VCAL).

In terms of assembly, interacts with CUL3.

The protein operates within protein modification; protein ubiquitination. Probable substrate-specific adapter of an E3 ubiquitin-protein ligase complex which mediates the ubiquitination and subsequent proteasomal degradation of target proteins. This Rattus norvegicus (Rat) protein is Kelch-like protein 36 (Klhl36).